The following is a 401-amino-acid chain: Exodeoxyribonuclease 7 large subunit (401 aa).

This sequence belongs to the XseA family. As to quaternary structure, heterooligomer composed of large and small subunits.

It localises to the cytoplasm. It catalyses the reaction Exonucleolytic cleavage in either 5'- to 3'- or 3'- to 5'-direction to yield nucleoside 5'-phosphates.. Functionally, bidirectionally degrades single-stranded DNA into large acid-insoluble oligonucleotides, which are then degraded further into small acid-soluble oligonucleotides. This Clostridium botulinum (strain Hall / ATCC 3502 / NCTC 13319 / Type A) protein is Exodeoxyribonuclease 7 large subunit.